The sequence spans 534 residues: Cytochalasin cluster regulator ccsR (534 aa).

Positions 13–54 (CDRCRRQKLRCVRPLKHGACEHPNNIEALEPCERCSRAGTPC) form a DNA-binding region, zn(2)-C6 fungal-type. Disordered stretches follow at residues 88–170 (IPKQ…LDAP) and 350–378 (TSAR…SAAS). Polar residues predominate over residues 109 to 125 (TGQNKGINDANAVTGSL). The span at 130–146 (PDHRSGSNVHRQPEARP) shows a compositional bias: basic and acidic residues. Residues 361-378 (DMCASSSNRDSSDLSAAS) show a composition bias toward low complexity.

It localises to the nucleus. Its function is as follows. Transcription factor involved in regulation of gene cluster that mediates the biosynthesis of the mycotoxins cytochalasins E and K. The sequence is that of Cytochalasin cluster regulator ccsR from Aspergillus clavatus (strain ATCC 1007 / CBS 513.65 / DSM 816 / NCTC 3887 / NRRL 1 / QM 1276 / 107).